We begin with the raw amino-acid sequence, 943 residues long: Leucine--tRNA ligase (943 aa).

Residues 40–51 (PYPSGAGLHVGH) carry the 'HIGH' region motif. The 'KMSKS' region signature appears at 717-721 (KMSKS). Lys720 serves as a coordination point for ATP.

It belongs to the class-I aminoacyl-tRNA synthetase family.

The protein resides in the cytoplasm. The catalysed reaction is tRNA(Leu) + L-leucine + ATP = L-leucyl-tRNA(Leu) + AMP + diphosphate. The polypeptide is Leucine--tRNA ligase (Bacteroides fragilis (strain ATCC 25285 / DSM 2151 / CCUG 4856 / JCM 11019 / LMG 10263 / NCTC 9343 / Onslow / VPI 2553 / EN-2)).